Reading from the N-terminus, the 462-residue chain is tRNA(Ile)-lysidine synthase (462 aa).

26–31 serves as a coordination point for ATP; it reads SGGVDS.

The protein belongs to the tRNA(Ile)-lysidine synthase family.

The protein resides in the cytoplasm. The catalysed reaction is cytidine(34) in tRNA(Ile2) + L-lysine + ATP = lysidine(34) in tRNA(Ile2) + AMP + diphosphate + H(+). In terms of biological role, ligates lysine onto the cytidine present at position 34 of the AUA codon-specific tRNA(Ile) that contains the anticodon CAU, in an ATP-dependent manner. Cytidine is converted to lysidine, thus changing the amino acid specificity of the tRNA from methionine to isoleucine. The sequence is that of tRNA(Ile)-lysidine synthase from Enterococcus faecalis (strain ATCC 700802 / V583).